The chain runs to 431 residues: 3-deoxy-D-manno-octulosonic acid transferase (431 aa).

A helical; Signal-anchor membrane pass occupies residues 5–27; it reads WLTSRLYDAFLVCAFFVSAPRIF. The Proton acceptor role is filled by E67. CMP is bound by residues 275 to 276, 315 to 317, and 342 to 345; these read PR, MGV, and NLLE.

This sequence belongs to the glycosyltransferase group 1 family. Glycosyltransferase 30 subfamily.

Its subcellular location is the cell inner membrane. The catalysed reaction is lipid IVA (E. coli) + CMP-3-deoxy-beta-D-manno-octulosonate = alpha-Kdo-(2-&gt;6)-lipid IVA (E. coli) + CMP + H(+). It catalyses the reaction alpha-Kdo-(2-&gt;6)-lipid IVA (E. coli) + CMP-3-deoxy-beta-D-manno-octulosonate = alpha-Kdo-(2-&gt;4)-alpha-Kdo-(2-&gt;6)-lipid IVA (E. coli) + CMP + H(+). The enzyme catalyses alpha-Kdo-(2-&gt;4)-alpha-Kdo-(2-&gt;6)-lipid IVA (E. coli) + CMP-3-deoxy-beta-D-manno-octulosonate = alpha-Kdo-(2-&gt;8)-alpha-Kdo-(2-&gt;4)-alpha-Kdo-(2-&gt;6)-lipid IVA (E. coli) + CMP + H(+). It participates in bacterial outer membrane biogenesis; LPS core biosynthesis. In terms of biological role, involved in lipopolysaccharide (LPS) biosynthesis. Catalyzes the transfer of three 3-deoxy-D-manno-octulosonate (Kdo) residues from CMP-Kdo to lipid IV(A), the tetraacyldisaccharide-1,4'-bisphosphate precursor of lipid A. Thus generates the genus-specific LPS epitope of Chlamydia, composed of the trisaccharide alpha-Kdo-(2-&gt;8)-alpha-Kdo-(2-&gt;4)-alpha-Kdo. In Chlamydia trachomatis serovar D (strain ATCC VR-885 / DSM 19411 / UW-3/Cx), this protein is 3-deoxy-D-manno-octulosonic acid transferase (waaA).